Reading from the N-terminus, the 244-residue chain is 1-(5-phosphoribosyl)-5-[(5-phosphoribosylamino)methylideneamino] imidazole-4-carboxamide isomerase (244 aa).

Residue Asp-8 is the Proton acceptor of the active site. Asp-129 (proton donor) is an active-site residue.

This sequence belongs to the HisA/HisF family.

The protein resides in the cytoplasm. It catalyses the reaction 1-(5-phospho-beta-D-ribosyl)-5-[(5-phospho-beta-D-ribosylamino)methylideneamino]imidazole-4-carboxamide = 5-[(5-phospho-1-deoxy-D-ribulos-1-ylimino)methylamino]-1-(5-phospho-beta-D-ribosyl)imidazole-4-carboxamide. It participates in amino-acid biosynthesis; L-histidine biosynthesis; L-histidine from 5-phospho-alpha-D-ribose 1-diphosphate: step 4/9. This is 1-(5-phosphoribosyl)-5-[(5-phosphoribosylamino)methylideneamino] imidazole-4-carboxamide isomerase from Bradyrhizobium sp. (strain ORS 278).